Here is a 38-residue protein sequence, read N- to C-terminus: Small ribosomal subunit protein uS12c (38 aa).

The disordered stretch occupies residues 1 to 26 (MPTIQQLIRNARQPIENRKKSPALRG).

Belongs to the universal ribosomal protein uS12 family. Part of the 30S ribosomal subunit.

Its subcellular location is the plastid. The protein localises to the chloroplast. In terms of biological role, with S4 and S5 plays an important role in translational accuracy. Located at the interface of the 30S and 50S subunits. This is Small ribosomal subunit protein uS12c (rps12) from Pinus contorta (Shore pine).